The chain runs to 355 residues: Probable dual-specificity RNA methyltransferase RlmN (355 aa).

The Proton acceptor role is filled by Glu-107. Positions 113–341 (TDKRLTVCVS…VSVRYSRGLE (229 aa)) constitute a Radical SAM core domain. Cys-120 and Cys-346 form a disulfide bridge. [4Fe-4S] cluster contacts are provided by Cys-127, Cys-131, and Cys-134. S-adenosyl-L-methionine is bound by residues 174–175 (GE), Ser-204, 227–229 (SLH), and Asn-303. Cys-346 serves as the catalytic S-methylcysteine intermediate.

This sequence belongs to the radical SAM superfamily. RlmN family. It depends on [4Fe-4S] cluster as a cofactor.

Its subcellular location is the cytoplasm. It carries out the reaction adenosine(2503) in 23S rRNA + 2 reduced [2Fe-2S]-[ferredoxin] + 2 S-adenosyl-L-methionine = 2-methyladenosine(2503) in 23S rRNA + 5'-deoxyadenosine + L-methionine + 2 oxidized [2Fe-2S]-[ferredoxin] + S-adenosyl-L-homocysteine. The enzyme catalyses adenosine(37) in tRNA + 2 reduced [2Fe-2S]-[ferredoxin] + 2 S-adenosyl-L-methionine = 2-methyladenosine(37) in tRNA + 5'-deoxyadenosine + L-methionine + 2 oxidized [2Fe-2S]-[ferredoxin] + S-adenosyl-L-homocysteine. Specifically methylates position 2 of adenine 2503 in 23S rRNA and position 2 of adenine 37 in tRNAs. The chain is Probable dual-specificity RNA methyltransferase RlmN from Trichormus variabilis (strain ATCC 29413 / PCC 7937) (Anabaena variabilis).